Reading from the N-terminus, the 107-residue chain is Nucleoid-associated protein Mmar10_0436 (107 aa).

Belongs to the YbaB/EbfC family. Homodimer.

The protein localises to the cytoplasm. It localises to the nucleoid. In terms of biological role, binds to DNA and alters its conformation. May be involved in regulation of gene expression, nucleoid organization and DNA protection. The chain is Nucleoid-associated protein Mmar10_0436 from Maricaulis maris (strain MCS10) (Caulobacter maris).